A 309-amino-acid polypeptide reads, in one-letter code: Thiamine-monophosphate kinase (309 aa).

Residues D25, T39, S40, and D41 each coordinate Mg(2+). D48 contacts substrate. D69 and D117 together coordinate Mg(2+). ATP-binding positions include 116–117 (GD) and R140. Residue D201 participates in Mg(2+) binding. S203 provides a ligand contact to ATP. D204 contributes to the Mg(2+) binding site. 2 residues coordinate substrate: E250 and W298.

It belongs to the thiamine-monophosphate kinase family.

It catalyses the reaction thiamine phosphate + ATP = thiamine diphosphate + ADP. It functions in the pathway cofactor biosynthesis; thiamine diphosphate biosynthesis; thiamine diphosphate from thiamine phosphate: step 1/1. Functionally, catalyzes the ATP-dependent phosphorylation of thiamine-monophosphate (TMP) to form thiamine-pyrophosphate (TPP), the active form of vitamin B1. In Pyrococcus horikoshii (strain ATCC 700860 / DSM 12428 / JCM 9974 / NBRC 100139 / OT-3), this protein is Thiamine-monophosphate kinase.